Here is a 362-residue protein sequence, read N- to C-terminus: Atypical chemokine receptor 3 (362 aa).

Over Met1–Leu47 the chain is Extracellular. Asn13 and Asn22 each carry an N-linked (GlcNAc...) asparagine glycan. The helical transmembrane segment at Ser48–Val68 threads the bilayer. The Cytoplasmic portion of the chain corresponds to Asn69–Cys81. Residues Tyr82–Val102 traverse the membrane as a helical segment. Over Ser103–Lys118 the chain is Extracellular. An intrachain disulfide couples Cys117 to Cys196. The chain crosses the membrane as a helical span at residues Ile119–Ser139. At Val140 to Arg162 the chain is on the cytoplasmic side. The helical transmembrane segment at Val163–Leu183 threads the bilayer. Over Lys184–Glu213 the chain is Extracellular. A helical transmembrane segment spans residues Leu214–Leu234. Residues Leu235 to Lys252 are Cytoplasmic-facing. The helical transmembrane segment at Ile253–Leu273 threads the bilayer. Residues Leu274–Ala296 lie on the Extracellular side of the membrane. A helical transmembrane segment spans residues Leu297–Asn319. The Cytoplasmic portion of the chain corresponds to Arg320–Lys362. The C-terminal cytoplasmic tail stretch occupies residues Tyr324–Lys362. A phosphoserine mark is found at Ser347, Ser350, and Ser355.

The protein belongs to the G-protein coupled receptor 1 family. Atypical chemokine receptor subfamily. As to quaternary structure, homodimer. Can form heterodimers with CXCR4; heterodimerization may regulate CXCR4 signaling activity. Interacts with ARRB1 and ARRB2. The Ser/Thr residues in the C-terminal cytoplasmic tail may be phosphorylated. Post-translationally, ubiquitinated at the Lys residues in its C-terminal cytoplasmic tail and is essential for correct trafficking from and to the cell membrane. Deubiquitinated by CXCL12-stimulation in a reversible manner. Expressed in vascular smooth muscle cells (at protein level). In brain, expressed in blood vessels, pyramidal cells in hippocampal subfield CA3, mature dentate gyrus granule cells, ventricle walls, olfactory bulb, accumbens shell, supraoptic, lateroanterior and ventromedial hypothalamic nuclei, medial region of thalamus, and motor nuclei, central gray and raphe magnus nucleus of brain stem. Detected in primary neurons, GABAergic neurons, astrocytes, cerebral cortex, ventral striatum and choroid plexus. Not detected in mesencephalon.

It localises to the cell membrane. The protein resides in the early endosome. The protein localises to the recycling endosome. Atypical chemokine receptor that controls chemokine levels and localization via high-affinity chemokine binding that is uncoupled from classic ligand-driven signal transduction cascades, resulting instead in chemokine sequestration, degradation, or transcytosis. Also known as interceptor (internalizing receptor) or chemokine-scavenging receptor or chemokine decoy receptor. Acts as a receptor for chemokines CXCL11 and CXCL12/SDF1. Chemokine binding does not activate G-protein-mediated signal transduction but instead induces beta-arrestin recruitment, leading to ligand internalization and activation of MAPK signaling pathway. Required for regulation of CXCR4 protein levels in migrating interneurons, thereby adapting their chemokine responsiveness. In glioma cells, transduces signals via MEK/ERK pathway, mediating resistance to apoptosis. Promotes cell growth and survival. Not involved in cell migration, adhesion or proliferation of normal hematopoietic progenitors but activated by CXCL11 in malignant hemapoietic cells, leading to phosphorylation of ERK1/2 (MAPK3/MAPK1) and enhanced cell adhesion and migration. Plays a regulatory role in CXCR4-mediated activation of cell surface integrins by CXCL12. Required for heart valve development. Functionally, atypical chemokine receptor that controls chemokine levels and localization via high-affinity chemokine binding that is uncoupled from classic ligand-driven signal transduction cascades, resulting instead in chemokine sequestration, degradation, or transcytosis. Also known as interceptor (internalizing receptor) or chemokine-scavenging receptor or chemokine decoy receptor. Acts as a receptor for chemokines CXCL11 and CXCL12/SDF1. Chemokine binding does not activate G-protein-mediated signal transduction but instead induces beta-arrestin recruitment, leading to ligand internalization and activation of MAPK signaling pathway. Required for regulation of CXCR4 protein levels in migrating interneurons, thereby adapting their chemokine responsiveness. In glioma cells, transduces signals via MEK/ERK pathway, mediating resistance to apoptosis. Promotes cell growth and survival. Not involved in cell migration, adhesion or proliferation of normal hematopoietic progenitors but activated by CXCL11 in malignant hemapoietic cells, leading to phosphorylation of ERK1/2 (MAPK3/MAPK1) and enhanced cell adhesion and migration. Plays a regulatory role in CXCR4-mediated activation of cell surface integrins by CXCL12. Required for heart valve development. Regulates axon guidance in the oculomotor system through the regulation of CXCL12 levels. This is Atypical chemokine receptor 3 from Rattus norvegicus (Rat).